The following is a 458-amino-acid chain: Zinc finger protein 239 (458 aa).

A Glycyl lysine isopeptide (Lys-Gly) (interchain with G-Cter in SUMO2) cross-link involves residue Lys108. Residue Ser191 is modified to Phosphoserine. C2H2-type zinc fingers lie at residues 207–229, 235–257, 263–285, 291–313, 319–341, 347–369, 375–397, 403–425, and 431–453; these read YECS…QRDH, YKCE…QAVH, YKCD…HAVH, YKCD…QRVH, YECE…QRVH, YKCG…RCIH, YQCY…LRVH, YHCG…QRVH, and YECS…QRVH.

This sequence belongs to the krueppel C2H2-type zinc-finger protein family.

The protein localises to the nucleus. In terms of biological role, may be involved in transcriptional regulation. The polypeptide is Zinc finger protein 239 (ZNF239) (Homo sapiens (Human)).